We begin with the raw amino-acid sequence, 249 residues long: UDP-N-acetyl-D-mannosaminuronic acid transferase (249 aa).

This sequence belongs to the glycosyltransferase 26 family.

It carries out the reaction UDP-N-acetyl-alpha-D-mannosaminouronate + N-acetyl-alpha-D-glucosaminyl-di-trans,octa-cis-undecaprenyl diphosphate = beta-D-ManNAcA-(1-&gt;4)-alpha-D-GlcNAc-di-trans,octa-cis-undecaprenyl diphosphate + UDP + H(+). It functions in the pathway bacterial outer membrane biogenesis; enterobacterial common antigen biosynthesis. In terms of biological role, catalyzes the synthesis of Und-PP-GlcNAc-ManNAcA (Lipid II), the second lipid-linked intermediate involved in enterobacterial common antigen (ECA) synthesis. The chain is UDP-N-acetyl-D-mannosaminuronic acid transferase from Pectobacterium atrosepticum (strain SCRI 1043 / ATCC BAA-672) (Erwinia carotovora subsp. atroseptica).